The primary structure comprises 154 residues: ATP synthase subunit b (154 aa).

Residues 5-27 form a helical membrane-spanning segment; the sequence is LLGQAIAFTLFVWFCMKYVWPPI.

It belongs to the ATPase B chain family. F-type ATPases have 2 components, F(1) - the catalytic core - and F(0) - the membrane proton channel. F(1) has five subunits: alpha(3), beta(3), gamma(1), delta(1), epsilon(1). F(0) has three main subunits: a(1), b(2) and c(10-14). The alpha and beta chains form an alternating ring which encloses part of the gamma chain. F(1) is attached to F(0) by a central stalk formed by the gamma and epsilon chains, while a peripheral stalk is formed by the delta and b chains.

It is found in the cell inner membrane. Functionally, f(1)F(0) ATP synthase produces ATP from ADP in the presence of a proton or sodium gradient. F-type ATPases consist of two structural domains, F(1) containing the extramembraneous catalytic core and F(0) containing the membrane proton channel, linked together by a central stalk and a peripheral stalk. During catalysis, ATP synthesis in the catalytic domain of F(1) is coupled via a rotary mechanism of the central stalk subunits to proton translocation. Component of the F(0) channel, it forms part of the peripheral stalk, linking F(1) to F(0). In Aliivibrio fischeri (strain ATCC 700601 / ES114) (Vibrio fischeri), this protein is ATP synthase subunit b.